Reading from the N-terminus, the 178-residue chain is Fatty-acid and retinol-binding protein 1 (178 aa).

Positions 1 to 16 (MYHRLILLALVGTTMA) are cleaved as a signal peptide. Coiled-coil stretches lie at residues 67-89 (DAALEALKDKSDKLYKNAVELRN) and 130-153 (KQAARDIIAKYQALSEETKEELKV).

It belongs to the fatty-acid and retinol-binding protein (FARBP) family. In terms of processing, not glycosylated.

The protein resides in the secreted. Binds retinol and different fatty acids. This is Fatty-acid and retinol-binding protein 1 from Brugia pahangi (Filarial nematode worm).